The primary structure comprises 196 residues: 7-methyl-GTP pyrophosphatase (196 aa).

The Proton acceptor role is filled by Asp69.

This sequence belongs to the Maf family. YceF subfamily. The cofactor is a divalent metal cation.

It localises to the cytoplasm. It catalyses the reaction N(7)-methyl-GTP + H2O = N(7)-methyl-GMP + diphosphate + H(+). Its function is as follows. Nucleoside triphosphate pyrophosphatase that hydrolyzes 7-methyl-GTP (m(7)GTP). May have a dual role in cell division arrest and in preventing the incorporation of modified nucleotides into cellular nucleic acids. This chain is 7-methyl-GTP pyrophosphatase, found in Photorhabdus laumondii subsp. laumondii (strain DSM 15139 / CIP 105565 / TT01) (Photorhabdus luminescens subsp. laumondii).